We begin with the raw amino-acid sequence, 460 residues long: Argininosuccinate lyase (460 aa).

This sequence belongs to the lyase 1 family. Argininosuccinate lyase subfamily.

It localises to the cytoplasm. It carries out the reaction 2-(N(omega)-L-arginino)succinate = fumarate + L-arginine. Its pathway is amino-acid biosynthesis; L-arginine biosynthesis; L-arginine from L-ornithine and carbamoyl phosphate: step 3/3. The protein is Argininosuccinate lyase of Mannheimia succiniciproducens (strain KCTC 0769BP / MBEL55E).